We begin with the raw amino-acid sequence, 428 residues long: 3-phosphoshikimate 1-carboxyvinyltransferase (428 aa).

K22, S23, and R27 together coordinate 3-phosphoshikimate. K22 lines the phosphoenolpyruvate pocket. Phosphoenolpyruvate is bound by residues G96 and R124. Residues S169, S170, Q171, S197, D313, N336, and K340 each coordinate 3-phosphoshikimate. Q171 is a phosphoenolpyruvate binding site. The Proton acceptor role is filled by D313. The phosphoenolpyruvate site is built by R344, R386, and K411.

It belongs to the EPSP synthase family. In terms of assembly, monomer.

The protein resides in the cytoplasm. The enzyme catalyses 3-phosphoshikimate + phosphoenolpyruvate = 5-O-(1-carboxyvinyl)-3-phosphoshikimate + phosphate. Its pathway is metabolic intermediate biosynthesis; chorismate biosynthesis; chorismate from D-erythrose 4-phosphate and phosphoenolpyruvate: step 6/7. Functionally, catalyzes the transfer of the enolpyruvyl moiety of phosphoenolpyruvate (PEP) to the 5-hydroxyl of shikimate-3-phosphate (S3P) to produce enolpyruvyl shikimate-3-phosphate and inorganic phosphate. The protein is 3-phosphoshikimate 1-carboxyvinyltransferase of Xenorhabdus nematophila (strain ATCC 19061 / DSM 3370 / CCUG 14189 / LMG 1036 / NCIMB 9965 / AN6).